A 398-amino-acid chain; its full sequence is Elongation factor Tu (398 aa).

A tr-type G domain is found at 10 to 207 (KPHVNIGTIG…TVDSYIPEPE (198 aa)). The G1 stretch occupies residues 19–26 (GHVDHGKT). 19 to 26 (GHVDHGKT) serves as a coordination point for GTP. Threonine 26 serves as a coordination point for Mg(2+). The G2 stretch occupies residues 63 to 67 (GITIN). The interval 84 to 87 (DAPG) is G3. GTP is bound by residues 84–88 (DAPGH) and 139–142 (NKVD). Residues 139-142 (NKVD) form a G4 region. The interval 177-179 (SAL) is G5.

The protein belongs to the TRAFAC class translation factor GTPase superfamily. Classic translation factor GTPase family. EF-Tu/EF-1A subfamily. As to quaternary structure, monomer.

The protein localises to the cytoplasm. It carries out the reaction GTP + H2O = GDP + phosphate + H(+). Functionally, GTP hydrolase that promotes the GTP-dependent binding of aminoacyl-tRNA to the A-site of ribosomes during protein biosynthesis. The sequence is that of Elongation factor Tu from Streptococcus pyogenes serotype M28 (strain MGAS6180).